The following is a 438-amino-acid chain: UDP-N-acetylmuramoylalanine--D-glutamate ligase (438 aa).

112-118 (GSNGKST) serves as a coordination point for ATP.

Belongs to the MurCDEF family. Requires Mg(2+) as cofactor.

It is found in the cytoplasm. The catalysed reaction is UDP-N-acetyl-alpha-D-muramoyl-L-alanine + D-glutamate + ATP = UDP-N-acetyl-alpha-D-muramoyl-L-alanyl-D-glutamate + ADP + phosphate + H(+). The protein operates within cell wall biogenesis; peptidoglycan biosynthesis. In terms of biological role, cell wall formation. Catalyzes the addition of glutamate to the nucleotide precursor UDP-N-acetylmuramoyl-L-alanine (UMA). This is UDP-N-acetylmuramoylalanine--D-glutamate ligase (murD) from Escherichia coli (strain K12).